The chain runs to 127 residues: MLKIMLAVFLGGGTGSVLRWWLGLRLNPVHHAIPVGTLTANLAGAFIIGAGLAWFNRMTHLDPMWKLLVTTGLCGGLTTFSTFSAEVVFLLQEGRIGWAGLNVALNLFGSFMMTALAFWLFSSLSVR.

4 helical membrane passes run 4–24 (IMLA…WLGL), 35–55 (VGTL…LAWF), 71–91 (TGLC…VFLL), and 101–121 (LNVA…FWLF). Positions 75 and 78 each coordinate Na(+).

This sequence belongs to the fluoride channel Fluc/FEX (TC 1.A.43) family.

The protein localises to the cell inner membrane. It catalyses the reaction fluoride(in) = fluoride(out). Na(+) is not transported, but it plays an essential structural role and its presence is essential for fluoride channel function. Functionally, fluoride-specific ion channel. Important for reducing fluoride concentration in the cell, thus reducing its toxicity. The polypeptide is Fluoride-specific ion channel FluC (Cronobacter sakazakii (strain ATCC BAA-894) (Enterobacter sakazakii)).